Consider the following 59-residue polypeptide: Sperm protamine P1-type (59 aa).

Positions 1–59 (MARYRRNRSRSRSRRRRRRRGGRGGRRGRRRRRHGQRRRGRRGRERTRRRRRRRRRSSS) are disordered.

Belongs to the protamine P1 family. As to expression, testis.

Its subcellular location is the nucleus. The protein resides in the chromosome. Its function is as follows. Protamines substitute for histones in the chromatin of sperm during the haploid phase of spermatogenesis. They compact sperm DNA into a highly condensed, stable and inactive complex. The polypeptide is Sperm protamine P1-type (Chrysemys picta bellii (Western painted turtle)).